The primary structure comprises 128 residues: Translation initiation factor 5A (128 aa).

Lys35 carries the hypusine modification.

It belongs to the eIF-5A family.

It localises to the cytoplasm. Its function is as follows. Functions by promoting the formation of the first peptide bond. This is Translation initiation factor 5A (eif5a) from Methanosarcina acetivorans (strain ATCC 35395 / DSM 2834 / JCM 12185 / C2A).